Here is an 86-residue protein sequence, read N- to C-terminus: CLAVATA3/ESR (CLE)-related protein 8 (86 aa).

A signal peptide spans 1–24 (MKVLKRDSMLLLITLYFLLTTSMA). The segment at 43–86 (DLKQNKAKPHLPNLFRTMRRVPTGPNPLHHISPPQPGSLNYARN) is disordered. Hydroxyproline occurs at positions 64 and 67. Proline 67 carries an O-linked (Ara...) hydroxyproline glycan.

The protein belongs to the CLV3/ESR signal peptide family. The O-glycosylation (arabinosylation) of the hydroxyproline Pro-67 enhances binding affinity of the CLE8p peptide for its receptor. In terms of tissue distribution, mostly expressed in siliques, and, to a lower extent, in flowers. Expressed in young embryos and endosperm.

The protein localises to the secreted. It is found in the extracellular space. Its function is as follows. Extracellular signal peptide that regulates cell fate. Represses root apical meristem maintenance. Positively regulates the expression of the transcription factor WOX8 and thus, regulates early embryo development. Regulates the transition of protophloem cells from proliferation to differentiation, thus impinging on postembryonic growth capacity of the root meristem; this signaling pathway requires CRN and CLV2. The chain is CLAVATA3/ESR (CLE)-related protein 8 from Arabidopsis thaliana (Mouse-ear cress).